The primary structure comprises 261 residues: L-erythrulose-1-phosphate isomerase (261 aa).

The active-site Electrophile is His-99. Glu-172 functions as the Proton acceptor in the catalytic mechanism.

The protein belongs to the triosephosphate isomerase family.

The enzyme catalyses L-erythrulose 1-phosphate = D-erythrulose 4-phosphate. It participates in carbohydrate metabolism. Involved in catabolism of D-apiose. Catalyzes the isomerization of L-erythrulose 1-phosphate to D-erythrulose 4-phosphate. The polypeptide is L-erythrulose-1-phosphate isomerase (Rhizobium rhizogenes (strain K84 / ATCC BAA-868) (Agrobacterium radiobacter)).